Reading from the N-terminus, the 267-residue chain is Phosphatidylserine decarboxylase proenzyme (267 aa).

Active-site charge relay system; for autoendoproteolytic cleavage activity residues include Asp-78, His-132, and Ser-236. Ser-236 functions as the Schiff-base intermediate with substrate; via pyruvic acid; for decarboxylase activity in the catalytic mechanism. At Ser-236 the chain carries Pyruvic acid (Ser); by autocatalysis.

It belongs to the phosphatidylserine decarboxylase family. PSD-B subfamily. Prokaryotic type I sub-subfamily. Heterodimer of a large membrane-associated beta subunit and a small pyruvoyl-containing alpha subunit. Pyruvate serves as cofactor. Post-translationally, is synthesized initially as an inactive proenzyme. Formation of the active enzyme involves a self-maturation process in which the active site pyruvoyl group is generated from an internal serine residue via an autocatalytic post-translational modification. Two non-identical subunits are generated from the proenzyme in this reaction, and the pyruvate is formed at the N-terminus of the alpha chain, which is derived from the carboxyl end of the proenzyme. The autoendoproteolytic cleavage occurs by a canonical serine protease mechanism, in which the side chain hydroxyl group of the serine supplies its oxygen atom to form the C-terminus of the beta chain, while the remainder of the serine residue undergoes an oxidative deamination to produce ammonia and the pyruvoyl prosthetic group on the alpha chain. During this reaction, the Ser that is part of the protease active site of the proenzyme becomes the pyruvoyl prosthetic group, which constitutes an essential element of the active site of the mature decarboxylase.

It is found in the cell membrane. The enzyme catalyses a 1,2-diacyl-sn-glycero-3-phospho-L-serine + H(+) = a 1,2-diacyl-sn-glycero-3-phosphoethanolamine + CO2. It functions in the pathway phospholipid metabolism; phosphatidylethanolamine biosynthesis; phosphatidylethanolamine from CDP-diacylglycerol: step 2/2. Functionally, catalyzes the formation of phosphatidylethanolamine (PtdEtn) from phosphatidylserine (PtdSer). This chain is Phosphatidylserine decarboxylase proenzyme, found in Helicobacter pylori (strain Shi470).